The sequence spans 481 residues: Glutamate mutase epsilon subunit (481 aa).

Arg-67 is an L-glutamate binding site. Gly-69 is a binding site for adenosylcob(III)alamin. An L-glutamate-binding site is contributed by Arg-99. Asn-122 is a binding site for adenosylcob(III)alamin. L-glutamate-binding positions include 148–149 (RH), Glu-170, and Tyr-176. Pro-179 lines the adenosylcob(III)alamin pocket. L-glutamate is bound at residue Tyr-180. Adenosylcob(III)alamin-binding residues include Phe-296, Lys-325, Glu-329, and Ile-333.

The protein belongs to the methylaspartate mutase GlmE subunit family. Heterotetramer composed of 2 epsilon subunits (GlmE) and 2 sigma subunits (GlmS). GlmE exists as a homodimer and GlmS as a monomer. Adenosylcob(III)alamin is required as a cofactor.

It carries out the reaction (2S,3S)-3-methyl-L-aspartate = L-glutamate. It functions in the pathway amino-acid degradation; L-glutamate degradation via mesaconate pathway; acetate and pyruvate from L-glutamate: step 1/4. In terms of biological role, catalyzes the carbon skeleton rearrangement of L-glutamate to L-threo-3-methylaspartate ((2S,3S)-3-methylaspartate). The sequence is that of Glutamate mutase epsilon subunit from Escherichia coli O157:H7.